The primary structure comprises 400 residues: Subtilisin-like protease CPC735_047380 (400 aa).

Residues 1-19 form the signal peptide; sequence MARINVVVSFLAALAVVQA. Residues 20–118 constitute a propeptide that is removed on maturation; it reads AQLLNLDGQK…IEPQRTFRAF (99 aa). An Inhibitor I9 domain is found at 35 to 116; it reads SYVVVMNDGL…NYIEPQRTFR (82 aa). The region spanning 128 to 400 is the Peptidase S8 domain; sequence SWGLGRISHT…DKLLYNGSGQ (273 aa). N153 carries an N-linked (GlcNAc...) asparagine glycan. Residues D160 and H191 each act as charge relay system in the active site. Residues N244 and N252 are each glycosylated (N-linked (GlcNAc...) asparagine). Residue S346 is the Charge relay system of the active site. N396 carries N-linked (GlcNAc...) asparagine glycosylation.

It belongs to the peptidase S8 family.

The protein localises to the secreted. Functionally, secreted subtilisin-like serine protease with keratinolytic activity that contributes to pathogenicity. The protein is Subtilisin-like protease CPC735_047380 of Coccidioides posadasii (strain C735) (Valley fever fungus).